We begin with the raw amino-acid sequence, 746 residues long: Polyribonucleotide nucleotidyltransferase (746 aa).

Mg(2+) contacts are provided by aspartate 519 and aspartate 525. The 60-residue stretch at 585–644 folds into the KH domain; sequence PRVIAVKIPVDKIGEVIGPKGKMINQIQEDTGADISIEDDGTVYIGATNGPSADAARSAI. An S1 motif domain is found at 656–728; the sequence is GERYLGTVVK…DRGKLSLSPV (73 aa).

It belongs to the polyribonucleotide nucleotidyltransferase family. The cofactor is Mg(2+).

It localises to the cytoplasm. The enzyme catalyses RNA(n+1) + phosphate = RNA(n) + a ribonucleoside 5'-diphosphate. In terms of biological role, involved in mRNA degradation. Catalyzes the phosphorolysis of single-stranded polyribonucleotides processively in the 3'- to 5'-direction. This Arthrobacter sp. (strain FB24) protein is Polyribonucleotide nucleotidyltransferase.